We begin with the raw amino-acid sequence, 426 residues long: Mannose-1-phosphate guanyltransferase alpha-B (426 aa).

The protein belongs to the transferase hexapeptide repeat family.

It carries out the reaction alpha-D-mannose 1-phosphate + GTP + H(+) = GDP-alpha-D-mannose + diphosphate. The protein operates within nucleotide-sugar biosynthesis; GDP-alpha-D-mannose biosynthesis; GDP-alpha-D-mannose from alpha-D-mannose 1-phosphate (GTP route): step 1/1. This chain is Mannose-1-phosphate guanyltransferase alpha-B (gmppa-b), found in Xenopus laevis (African clawed frog).